A 394-amino-acid chain; its full sequence is NAD(P)H-quinone oxidoreductase subunit H (394 aa).

Belongs to the complex I 49 kDa subunit family. In terms of assembly, NDH-1 can be composed of about 15 different subunits; different subcomplexes with different compositions have been identified which probably have different functions.

It is found in the cellular thylakoid membrane. The catalysed reaction is a plastoquinone + NADH + (n+1) H(+)(in) = a plastoquinol + NAD(+) + n H(+)(out). It carries out the reaction a plastoquinone + NADPH + (n+1) H(+)(in) = a plastoquinol + NADP(+) + n H(+)(out). NDH-1 shuttles electrons from an unknown electron donor, via FMN and iron-sulfur (Fe-S) centers, to quinones in the respiratory and/or the photosynthetic chain. The immediate electron acceptor for the enzyme in this species is believed to be plastoquinone. Couples the redox reaction to proton translocation, and thus conserves the redox energy in a proton gradient. Cyanobacterial NDH-1 also plays a role in inorganic carbon-concentration. This is NAD(P)H-quinone oxidoreductase subunit H from Synechococcus sp. (strain CC9605).